The following is a 396-amino-acid chain: Elongation factor Tu (396 aa).

The tr-type G domain maps to K10–V206. Positions G19–T26 are G1. G19 to T26 contributes to the GTP binding site. T26 serves as a coordination point for Mg(2+). Positions G62–N66 are G2. The G3 stretch occupies residues D83–G86. GTP contacts are provided by residues D83–H87 and N138–D141. The G4 stretch occupies residues N138–D141. A G5 region spans residues S176–L178.

This sequence belongs to the TRAFAC class translation factor GTPase superfamily. Classic translation factor GTPase family. EF-Tu/EF-1A subfamily. As to quaternary structure, monomer.

The protein localises to the cytoplasm. It catalyses the reaction GTP + H2O = GDP + phosphate + H(+). In terms of biological role, GTP hydrolase that promotes the GTP-dependent binding of aminoacyl-tRNA to the A-site of ribosomes during protein biosynthesis. The polypeptide is Elongation factor Tu (Beutenbergia cavernae (strain ATCC BAA-8 / DSM 12333 / CCUG 43141 / JCM 11478 / NBRC 16432 / NCIMB 13614 / HKI 0122)).